The primary structure comprises 196 residues: ATP-dependent Clp protease proteolytic subunit (196 aa).

Ser101 (nucleophile) is an active-site residue. His126 is an active-site residue.

Belongs to the peptidase S14 family. In terms of assembly, component of the chloroplastic Clp protease core complex.

The protein localises to the plastid. It localises to the chloroplast stroma. The catalysed reaction is Hydrolysis of proteins to small peptides in the presence of ATP and magnesium. alpha-casein is the usual test substrate. In the absence of ATP, only oligopeptides shorter than five residues are hydrolyzed (such as succinyl-Leu-Tyr-|-NHMec, and Leu-Tyr-Leu-|-Tyr-Trp, in which cleavage of the -Tyr-|-Leu- and -Tyr-|-Trp bonds also occurs).. In terms of biological role, cleaves peptides in various proteins in a process that requires ATP hydrolysis. Has a chymotrypsin-like activity. Plays a major role in the degradation of misfolded proteins. The chain is ATP-dependent Clp protease proteolytic subunit from Lobularia maritima (Sweet alyssum).